A 390-amino-acid polypeptide reads, in one-letter code: MVIPELFSAGLILLLLFITGFVGMKMKIPDVVIFILLGIAVGGLLSGSHLLHFAGEVGIVLLFFMLGMEFPLKQLMSIAKKVLRAGILDVALSFGVTMAICMMMGLDVITSLIIGGVAYATSSSITAKMLESSKRMANPESEFMLGLLIFEDLVAPILVAVLVGLTAGMALTAGSMSLLVVKVVALVAGAVILGVFLFRKLGSFFDRHMKHDLFILFVIGLALMYGGLALYLDLSEVLGAFLAGIMLAEVKRTHELELMVVRFRDLLLPLFFLYFGTTISFSEGIPMIPLLILVLVWSVIAKVIVGVLGGRWYGLTKKVSLRAGLSLTQRGEFSIIIASLAAGSIKAFSSVFILASAMIGILLFQFAPSIANKFYGKKAKTSVKQHVGSA.

The next 10 membrane-spanning stretches (helical) occupy residues 2–22 (VIPE…TGFV), 31–51 (VVIF…SHLL), 52–72 (HFAG…EFPL), 94–114 (FGVT…SLII), 143–163 (FMLG…AVLV), 178–198 (LLVV…VFLF), 212–232 (DLFI…ALYL), 266–286 (LLLP…EGIP), 288–308 (IPLL…VGVL), and 351–371 (VFIL…PSIA).

This sequence belongs to the monovalent cation:proton antiporter 2 (CPA2) transporter (TC 2.A.37) family. In terms of assembly, interacts with AmhM.

Its subcellular location is the cell membrane. With respect to regulation, amhT alone exhibits antiport activity, but interaction with AmhM confers different properties, such as higher KM for potassium. Functionally, ammonium/proton antiporter that mediates the efflux of ammonium ions. Can also transport potassium or rubidium, but not sodium or lithium. The polypeptide is Ammonium/H(+) antiporter subunit AmhT (amhT) (Alkalihalophilus pseudofirmus (strain ATCC BAA-2126 / JCM 17055 / OF4) (Bacillus pseudofirmus)).